Here is a 421-residue protein sequence, read N- to C-terminus: Medium-chain specific acyl-CoA dehydrogenase, mitochondrial (421 aa).

Residues 1–25 constitute a mitochondrion transit peptide; that stretch reads MAAGFGRCCRVLRSISRFHWRSQHT. Lys69 carries the N6-acetyllysine; alternate modification. Position 69 is an N6-succinyllysine; alternate (Lys69). Residue 158–167 participates in FAD binding; the sequence is YCVTEPGAGS. Ser167 is an octanoyl-CoA binding site. Lys179 is subject to N6-succinyllysine. 191–193 provides a ligand contact to FAD; it reads WIT. Residues Lys212, Lys217, Lys259, and Lys271 each carry the N6-acetyllysine; alternate modification. An N6-succinyllysine; alternate mark is found at Lys212, Lys217, Lys259, and Lys271. Octanoyl-CoA is bound at residue Asp278. An N6-acetyllysine modification is found at Lys279. Arg281 provides a ligand contact to octanoyl-CoA. Lys301 carries the post-translational modification N6-acetyllysine. Residues 306 to 308 and 316 to 317 each bind FAD; these read RKT and HQ. Thr351 is modified (phosphothreonine). Residues 374–378 and 401–405 contribute to the FAD site; these read QILGG and EGTSQ. Residue Glu401 participates in octanoyl-CoA binding. The active-site Proton acceptor is Glu401.

This sequence belongs to the acyl-CoA dehydrogenase family. As to quaternary structure, homotetramer. Interacts with the heterodimeric electron transfer flavoprotein ETF. It depends on FAD as a cofactor. In terms of processing, acetylated. Could occur at proximity of the cofactor-binding sites and reduce the catalytic activity. Could be deacetylated by SIRT3.

Its subcellular location is the mitochondrion matrix. It catalyses the reaction a medium-chain 2,3-saturated fatty acyl-CoA + oxidized [electron-transfer flavoprotein] + H(+) = a medium-chain (2E)-enoyl-CoA + reduced [electron-transfer flavoprotein]. It carries out the reaction pentanoyl-CoA + oxidized [electron-transfer flavoprotein] + H(+) = (2E)-pentenoyl-CoA + reduced [electron-transfer flavoprotein]. The enzyme catalyses hexanoyl-CoA + oxidized [electron-transfer flavoprotein] + H(+) = (2E)-hexenoyl-CoA + reduced [electron-transfer flavoprotein]. The catalysed reaction is octanoyl-CoA + oxidized [electron-transfer flavoprotein] + H(+) = (2E)-octenoyl-CoA + reduced [electron-transfer flavoprotein]. It catalyses the reaction decanoyl-CoA + oxidized [electron-transfer flavoprotein] + H(+) = (2E)-decenoyl-CoA + reduced [electron-transfer flavoprotein]. It carries out the reaction dodecanoyl-CoA + oxidized [electron-transfer flavoprotein] + H(+) = (2E)-dodecenoyl-CoA + reduced [electron-transfer flavoprotein]. The enzyme catalyses tetradecanoyl-CoA + oxidized [electron-transfer flavoprotein] + H(+) = (2E)-tetradecenoyl-CoA + reduced [electron-transfer flavoprotein]. The catalysed reaction is oxidized [electron-transfer flavoprotein] + hexadecanoyl-CoA + H(+) = (2E)-hexadecenoyl-CoA + reduced [electron-transfer flavoprotein]. Its pathway is lipid metabolism; mitochondrial fatty acid beta-oxidation. In terms of biological role, medium-chain specific acyl-CoA dehydrogenase is one of the acyl-CoA dehydrogenases that catalyze the first step of mitochondrial fatty acid beta-oxidation, an aerobic process breaking down fatty acids into acetyl-CoA and allowing the production of energy from fats. The first step of fatty acid beta-oxidation consists in the removal of one hydrogen from C-2 and C-3 of the straight-chain fatty acyl-CoA thioester, resulting in the formation of trans-2-enoyl-CoA. Electron transfer flavoprotein (ETF) is the electron acceptor that transfers electrons to the main mitochondrial respiratory chain via ETF-ubiquinone oxidoreductase (ETF dehydrogenase). Among the different mitochondrial acyl-CoA dehydrogenases, medium-chain specific acyl-CoA dehydrogenase acts specifically on acyl-CoAs with saturated 6 to 12 carbons long primary chains. In Homo sapiens (Human), this protein is Medium-chain specific acyl-CoA dehydrogenase, mitochondrial.